The sequence spans 245 residues: Lactate utilization protein A 1 (245 aa).

This sequence belongs to the LutA/YkgE family.

In terms of biological role, is involved in L-lactate degradation and allows cells to grow with lactate as the sole carbon source. This chain is Lactate utilization protein A 1, found in Bacillus mycoides (strain KBAB4) (Bacillus weihenstephanensis).